Here is a 312-residue protein sequence, read N- to C-terminus: Acetyl-coenzyme A carboxylase carboxyl transferase subunit alpha (312 aa).

One can recognise a CoA carboxyltransferase C-terminal domain in the interval 36 to 286; the sequence is RLDKEVKSIY…KEYFLDALRT (251 aa).

This sequence belongs to the AccA family. Acetyl-CoA carboxylase is a heterohexamer composed of biotin carboxyl carrier protein (AccB), biotin carboxylase (AccC) and two subunits each of ACCase subunit alpha (AccA) and ACCase subunit beta (AccD).

It is found in the cytoplasm. The enzyme catalyses N(6)-carboxybiotinyl-L-lysyl-[protein] + acetyl-CoA = N(6)-biotinyl-L-lysyl-[protein] + malonyl-CoA. It functions in the pathway lipid metabolism; malonyl-CoA biosynthesis; malonyl-CoA from acetyl-CoA: step 1/1. Its function is as follows. Component of the acetyl coenzyme A carboxylase (ACC) complex. First, biotin carboxylase catalyzes the carboxylation of biotin on its carrier protein (BCCP) and then the CO(2) group is transferred by the carboxyltransferase to acetyl-CoA to form malonyl-CoA. The chain is Acetyl-coenzyme A carboxylase carboxyl transferase subunit alpha from Helicobacter pylori (strain ATCC 700392 / 26695) (Campylobacter pylori).